Reading from the N-terminus, the 279-residue chain is GDT1-like protein 3 (279 aa).

Residues 1–23 (MDPNPRLLILLVLLAFSATVAVA) form the signal peptide. The next 6 membrane-spanning stretches (helical) occupy residues 64 to 84 (VGPGLFDALFASLSMILVSEI), 103 to 123 (IVLSGALSALYVMTVLSTGLG), 135 to 155 (TNSAATVLYLFFGLRLLYIAW), 186 to 206 (FFGRFCTPIFLEAFILTFLAE), 224 to 244 (AIGVAVGASLGHTVCTSLAVI), and 258 to 278 (VATIGGVLFLGFSVSSYFYPP).

Belongs to the GDT1 family.

Its subcellular location is the membrane. The polypeptide is GDT1-like protein 3 (Oryza sativa subsp. japonica (Rice)).